The primary structure comprises 130 residues: Small ribosomal subunit protein uS11 (130 aa).

It belongs to the universal ribosomal protein uS11 family. As to quaternary structure, part of the 30S ribosomal subunit. Interacts with proteins S7 and S18. Binds to IF-3.

Functionally, located on the platform of the 30S subunit, it bridges several disparate RNA helices of the 16S rRNA. Forms part of the Shine-Dalgarno cleft in the 70S ribosome. The protein is Small ribosomal subunit protein uS11 of Ruegeria pomeroyi (strain ATCC 700808 / DSM 15171 / DSS-3) (Silicibacter pomeroyi).